The sequence spans 1287 residues: DNA-directed RNA polymerase subunit beta (1287 aa).

Belongs to the RNA polymerase beta chain family. As to quaternary structure, the RNAP catalytic core consists of 2 alpha, 1 beta, 1 beta' and 1 omega subunit. When a sigma factor is associated with the core the holoenzyme is formed, which can initiate transcription.

It carries out the reaction RNA(n) + a ribonucleoside 5'-triphosphate = RNA(n+1) + diphosphate. Its function is as follows. DNA-dependent RNA polymerase catalyzes the transcription of DNA into RNA using the four ribonucleoside triphosphates as substrates. The sequence is that of DNA-directed RNA polymerase subunit beta from Salinibacter ruber (strain DSM 13855 / M31).